The following is a 101-amino-acid chain: Glutaredoxin-1 (101 aa).

Residues 3–101 (DSFVQSKLRD…MMLRQIGALV (99 aa)) form the Glutaredoxin domain. Cys-23 and Cys-26 are joined by a disulfide.

Belongs to the glutaredoxin family.

Its subcellular location is the cytoplasm. Functionally, has a glutathione-disulfide oxidoreductase activity in the presence of NADPH and glutathione reductase. Reduces low molecular weight disulfides and proteins. This Gallus gallus (Chicken) protein is Glutaredoxin-1 (GLRX).